The chain runs to 451 residues: Tubulin gamma-1 chain (451 aa).

S131 carries the post-translational modification Phosphoserine; by BRSK1. GTP is bound at residue 142–148 (AGGTGSG).

Belongs to the tubulin family. In terms of assembly, component of the gamma-tubulin ring complex (gTuRC) consisting of TUBGCP2, TUBGCP3, TUBGCP4, TUBGCP5 and TUBGCP6 and gamma-tubulin TUBG1 or TUBG2. TUBGCP2, TUBGCP3, TUBGCP4, TUBGCP5 and TUBGCP6 assemble in a 5:5:2:1:1 stoichiometry; each is associated with a gamma-tubulin, thereby arranging 14 gamma-tubulins in a helical manner. Gamma-tubulin at the first position is blocked by TUBGCP3 at the last position, allowing 13 protafilaments to grow into a microtubule. The gTuRC (via TUBGCP3 and TUBGCP6) interacts with ACTB and MZT1; the interactions form a luminal bridge that stabilizes the initial structure during complex assembly. The gTuRC (via TUBGCP2) interacts with MZT2A/MZT2B and CDK5RAP2 (via CM1 motif); the interactions play a role in gTuRC activation. Interacts with alpha-beta tubulin heterodimers; the interaction allows microtubules to nucleate from the gTuRC. Interacts with B9D2. Interacts with CDK5RAP2; the interaction is leading to centrosomal localization of TUBG1 and CDK5RAP2. Interacts with CIMAP3. Interacts with SAS6 and NUP62 at the centrosome. Interacts with EML3 (phosphorylated at 'Thr-881') and HAUS8. Interacts with DNM2; this interaction may participate in centrosome cohesion. Interacts with CCDC66. In terms of processing, phosphorylation at Ser-131 by BRSK1 regulates centrosome duplication, possibly by mediating relocation of gamma-tubulin and its associated proteins from the cytoplasm to the centrosome.

Its subcellular location is the cytoplasm. It is found in the cytoskeleton. The protein localises to the microtubule organizing center. It localises to the centrosome. The protein resides in the spindle. Tubulin is the major constituent of microtubules, protein filaments consisting of alpha- and beta-tubulin heterodimers. Gamma-tubulin is a key component of the gamma-tubulin ring complex (gTuRC) which mediates microtubule nucleation. The gTuRC regulates the minus-end nucleation of alpha-beta tubulin heterodimers that grow into microtubule protafilaments, a critical step in centrosome duplication and spindle formation. The protein is Tubulin gamma-1 chain of Homo sapiens (Human).